A 129-amino-acid chain; its full sequence is Ropporin-1 (129 aa).

Residues 11–34 form the RIIa domain; that stretch reads PELPELLKTQPPDLIQWAAEYFGA.

The protein belongs to the ropporin family. In terms of assembly, homodimer. Interacts with AKAP3. May interact with SPA17. Interacts with RHPN1. Interacts with FSCB; the interaction increases upon spermatozoa capacitation conditions. Interacts with CFAP61. Sumoylated, sumoylation decreases upon spermatozoa capacitation conditions.

It is found in the cell projection. It localises to the cilium. The protein resides in the flagellum. In terms of biological role, important for male fertility. With ROPN1L, involved in fibrous sheath integrity and sperm motility, plays a role in PKA-dependent signaling processes required for spermatozoa capacitation. The protein is Ropporin-1 of Mesocricetus auratus (Golden hamster).